The following is a 79-amino-acid chain: Short neurotoxin 2 (79 aa).

An N-terminal signal peptide occupies residues 1–19; the sequence is PLLLTLVVVTIVCLDLGYT. Intrachain disulfides connect Cys22-Cys41, Cys36-Cys58, Cys60-Cys71, and Cys72-Cys77.

The protein belongs to the three-finger toxin family. Short-chain subfamily. Type I alpha-neurotoxin sub-subfamily. In terms of tissue distribution, expressed by the venom gland.

It localises to the secreted. In terms of biological role, binds to muscle nicotinic acetylcholine receptor (nAChR) and inhibit acetylcholine from binding to the receptor, thereby impairing neuromuscular transmission. In Hydrophis cyanocinctus (Asian annulated sea snake), this protein is Short neurotoxin 2.